We begin with the raw amino-acid sequence, 451 residues long: Cindoxin reductase (451 aa).

Positions 24, 45, 53, and 89 each coordinate FAD. NADP(+)-binding positions include 157–160 and 197–198; these read NGNV and RS. FAD is bound by residues Trp338 and 345–347; that span reads GGI. NADP(+) is bound at residue Gly345.

Belongs to the ferredoxin--NADP reductase type 1 family. FAD serves as cofactor.

In terms of biological role, involved in the degradation of cineol (eucalyptol). Catalyzes the reduction of cindoxin (CinC). This chain is Cindoxin reductase (cinB), found in Citrobacter braakii.